The primary structure comprises 321 residues: MGEWTILERLLEAAVQQHSTMIGRILLTVVVIFRILIVAIVGETVYDDEQTMFVCNTLQPGCNQACYDRAFPISHIRYWVFQIIMVCTPSLCFITYSVHQSAKQRERRYSTVFLALDRDPAESIGGPGGTGGGGSGGSKREDKKLQNAIVNGVLQNTETTSKETEPDCLEVKELAPHPSGLRTAARSKLRRQEGISRFYIIQVVFRNALEIGFLVGQYFLYGFSVPGLYECNRYPCIKEVECYVSRPTEKTVFLVFMFAVSGICVVLNLAELNHLGWRKIKLAVRGAQAKRKSVYEIRNKDLPRVSVPNFGRTQSSDSAYV.

Residues 1–19 are Cytoplasmic-facing; it reads MGEWTILERLLEAAVQQHS. The chain crosses the membrane as a helical span at residues 20 to 42; the sequence is TMIGRILLTVVVIFRILIVAIVG. The Extracellular segment spans residues 43-75; that stretch reads ETVYDDEQTMFVCNTLQPGCNQACYDRAFPISH. A helical transmembrane segment spans residues 76–98; that stretch reads IRYWVFQIIMVCTPSLCFITYSV. Topologically, residues 99 to 197 are cytoplasmic; that stretch reads HQSAKQRERR…KLRRQEGISR (99 aa). Residues 120–141 are disordered; that stretch reads PAESIGGPGGTGGGGSGGSKRE. Gly residues predominate over residues 125 to 137; the sequence is GGPGGTGGGGSGG. A helical membrane pass occupies residues 198-220; it reads FYIIQVVFRNALEIGFLVGQYFL. Over 221-252 the chain is Extracellular; the sequence is YGFSVPGLYECNRYPCIKEVECYVSRPTEKTV. A helical membrane pass occupies residues 253 to 275; sequence FLVFMFAVSGICVVLNLAELNHL. The Cytoplasmic segment spans residues 276-321; sequence GWRKIKLAVRGAQAKRKSVYEIRNKDLPRVSVPNFGRTQSSDSAYV.

The protein belongs to the connexin family. Delta-type subfamily. As to quaternary structure, a connexon is composed of a hexamer of connexins. As to expression, highly expressed in neurons.

The protein resides in the cell membrane. Its subcellular location is the cell junction. It localises to the gap junction. Functionally, one gap junction consists of a cluster of closely packed pairs of transmembrane channels, the connexons, through which materials of low MW diffuse from one cell to a neighboring cell. This is Gap junction delta-2 protein (Gjd2) from Rattus norvegicus (Rat).